The primary structure comprises 1204 residues: TPR repeat-containing protein DDB_G0287999 (1204 aa).

Residues 32 to 48 (TTDTTTTTSTSTTTDTD) show a composition bias toward low complexity. Positions 32–55 (TTDTTTTTSTSTTTDTDTNSEKSN) are disordered. 3 TPR repeats span residues 263-296 (SKGLLLMIEFYIKIGDIDSAFKFFEVNFKDYKDL), 379-412 (NDSNNIIKNSSSKLEFNDDCVSNYKKLVNFDQLY), and 583-617 (IQHFVETALIYLINDNSYQEAVKLYIYFLKEGSVT). The tract at residues 360-387 (QPPPQEQQLMDDDSNSNSNNDSNNIIKN) is disordered. Over residues 374–387 (NSNSNNDSNNIIKN) the composition is skewed to low complexity. 2 disordered regions span residues 639 to 660 (NNNNNNNNNNNNNNNNNNNNNN) and 761 to 797 (DDNDNDNNNNNNNNNNNNNDDDDGGGHGGGDVFKTTT). A compositionally biased stretch (low complexity) spans 766–778 (DNNNNNNNNNNNN).

The protein is TPR repeat-containing protein DDB_G0287999 of Dictyostelium discoideum (Social amoeba).